A 279-amino-acid chain; its full sequence is High choriolytic enzyme 2 (279 aa).

A signal peptide spans Met-1–Ala-20. The propeptide at Leu-21–Arg-79 is activation peptide. Over residues Glu-26–Glu-40 the composition is skewed to basic and acidic residues. Positions Glu-26–Asp-46 are disordered. An N-linked (GlcNAc...) asparagine glycan is attached at Asn-62. The region spanning Asn-80–Arg-279 is the Peptidase M12A domain. Cystine bridges form between Cys-84/Cys-89, Cys-129/Cys-278, and Cys-150/Cys-170. His-178 provides a ligand contact to Zn(2+). The active site involves Glu-179. Zn(2+) is bound by residues His-182 and His-188.

Zn(2+) serves as cofactor.

The protein resides in the zymogen granule. It catalyses the reaction Hydrolysis of the inner layer of fish egg envelope. Also hydrolysis of casein and small molecule substrates such as succinyl-Leu-Leu-Val-Tyr-|-7-(4-methyl)coumarylamide.. Its function is as follows. Participates in the breakdown of the egg envelope, which is derived from the egg extracellular matrix, at the time of hatching. Thus allowing the newly hatched fish to swim free. HCE binds tightly to the egg envelope while it exerts the choriolytic swelling action. This chain is High choriolytic enzyme 2 (hceb), found in Oryzias latipes (Japanese rice fish).